The chain runs to 375 residues: Sulfite efflux pump SSU1 (375 aa).

The Cytoplasmic segment spans residues 1–25; the sequence is MPSGSGFHNIEEAGEKARKRDDWIA. The helical transmembrane segment at 26–46 threads the bilayer; that stretch reads ISNFHPGWFSVNMGTGITAIL. At 47-59 the chain is on the extracellular side; it reads LQNLPYQFPGLHY. Residues 60–80 traverse the membrane as a helical segment; that stretch reads IAVVLFILNVIIFFLFLTISI. The Cytoplasmic portion of the chain corresponds to 81–101; it reads TRYCLWPDKFKAMLAHPAHSM. The chain crosses the membrane as a helical span at residues 102 to 122; sequence LLGTFPMGFATIINCIVFICV. Residues 123–135 are Extracellular-facing; sequence PVWGEWASRFAWG. Residues 136–156 form a helical membrane-spanning segment; the sequence is LWWIDAAVSVAICYFVPFMLM. The Cytoplasmic portion of the chain corresponds to 157–167; the sequence is TKHTSSLETMT. A helical membrane pass occupies residues 168–188; it reads AAWLLPIVAPVVAAASGGVVA. The Extracellular segment spans residues 189–200; that stretch reads DSLQNDTHALIT. N-linked (GlcNAc...) asparagine glycosylation is present at N193. A helical transmembrane segment spans residues 201-221; sequence ILVCYAMWGSAVPLAMVILVI. Over 222–234 the chain is Cytoplasmic; that stretch reads YFQRLAIHKLVPR. The helical transmembrane segment at 235–255 threads the bilayer; the sequence is AAIVSALLPIGPLGQGGFGLM. The Extracellular segment spans residues 256 to 277; it reads QLGVVAKRVFPRLDFLAPIAGD. Residues 278-298 traverse the membrane as a helical segment; it reads IFYVMGAFIAMIMWGFGLIWL. The Cytoplasmic portion of the chain corresponds to 299–309; the sequence is WFALASFTRGK. A helical membrane pass occupies residues 310-330; it reads FYFNIGWWAFTFPLGVFTTAT. The Extracellular segment spans residues 331–343; sequence TQMGKEFNSPFFD. The chain crosses the membrane as a helical span at residues 344-364; the sequence is ILGTFFSIVVTCMWVLVFALT. Residues 365–375 lie on the Cytoplasmic side of the membrane; that stretch reads VYKSCTKELFR.

This sequence belongs to the tellurite-resistance/dicarboxylate transporter (TDT) family.

It is found in the cell membrane. In terms of biological role, sulphite efflux pump required for the secretion of sulphite as a reducing agent. In the presence of sulphite, cystine in keratin is directly cleaved to cysteine and S-sulphocysteine, and thereby, reduced proteins become accessible to hydrolysis by a variety of secreted endo- and exoproteases. Excretion of sulphite mediated by an efflux pump also represents a detoxification pathway for dermatophytes during infection of the epidermal stratum corneum, hair and nails, which are rich in cysteine. The protein is Sulfite efflux pump SSU1 (SSU1) of Trichophyton rubrum (Athlete's foot fungus).